A 443-amino-acid chain; its full sequence is MSTTDSIVSSQTKQSSWRKSDTTWTLGLFGTAIGAGVLFFPIRAGFGGLIPILLMLVLAYPIAFYCHRALARLCLSGSNPSGNITETVEEHFGKTGGVVITFLYFFAICPLLWIYGVTITNTFMTFWENQLQMPALNRGVVALFLLLLMAFVIWFGKDLMVKVMSYLVWPFIASLVLISLSLIPYWNSAVIDQVDLSNIALTGHDGILVTVWLGISIMVFSFNFSPIVSSFVVSKREEYEKEFGRDFTERKCSQIISRASMLMVAVVMFFAFSCLFTLSPQNMADAKAQNIPVLSYLANHFASLSGTKSTFATVLEYGASIIALVAIFKSFFGHYLGTLEGLNGLVLKFGYKGDKTKVSMGKLNTISMIFIMGSTWIVAYANPNILDLIEAMGAPIIASLLCLLPMYAIRKAPSLAKYRGRLDNVFVTLIGLLTILNIVYKLF.

The next 11 helical transmembrane spans lie at 22–42 (TTWT…FFPI), 44–64 (AGFG…PIAF), 97–117 (GVVI…IYGV), 140–160 (VVAL…KDLM), 163–183 (VMSY…LSLI), 207–227 (ILVT…FSPI), 259–279 (ASML…FTLS), 319–339 (ASII…LGTL), 366–386 (ISMI…PNIL), 389–409 (IEAM…MYAI), and 423–443 (DNVF…YKLF).

Belongs to the amino acid/polyamine transporter 2 family. SdaC/TdcC subfamily.

The protein localises to the cell inner membrane. It carries out the reaction L-threonine(in) + H(+)(in) = L-threonine(out) + H(+)(out). It catalyses the reaction L-serine(in) + H(+)(in) = L-serine(out) + H(+)(out). Its function is as follows. Involved in the import of threonine and serine into the cell, with the concomitant import of a proton (symport system). This chain is Threonine/serine transporter TdcC, found in Salmonella arizonae (strain ATCC BAA-731 / CDC346-86 / RSK2980).